The primary structure comprises 214 residues: uncharacterized protein (214 aa).

The N-terminal stretch at 1–24 is a signal peptide; it reads MKIWIKAICITSFVIQMSACSSSA. The 134-residue stretch at 64 to 197 folds into the TNase-like domain; that stretch reads ETVKGKVLHI…KEAKAGVWSI (134 aa). Residues arginine 91, glutamate 99, and arginine 142 contribute to the active site.

This is an uncharacterized protein from Bacillus anthracis.